A 1357-amino-acid chain; its full sequence is DNA-directed RNA polymerase subunit beta (1357 aa).

Belongs to the RNA polymerase beta chain family. In terms of assembly, the RNAP catalytic core consists of 2 alpha, 1 beta, 1 beta' and 1 omega subunit. When a sigma factor is associated with the core the holoenzyme is formed, which can initiate transcription.

It carries out the reaction RNA(n) + a ribonucleoside 5'-triphosphate = RNA(n+1) + diphosphate. Functionally, DNA-dependent RNA polymerase catalyzes the transcription of DNA into RNA using the four ribonucleoside triphosphates as substrates. This chain is DNA-directed RNA polymerase subunit beta, found in Pseudomonas fluorescens (strain Pf0-1).